Reading from the N-terminus, the 718-residue chain is Ribosomal RNA large subunit methyltransferase K/L (718 aa).

Positions 44 to 155 (DAYKVCIYSH…KQYVNVFLCL (112 aa)) constitute a THUMP domain.

Belongs to the methyltransferase superfamily. RlmKL family.

The protein localises to the cytoplasm. The enzyme catalyses guanosine(2445) in 23S rRNA + S-adenosyl-L-methionine = N(2)-methylguanosine(2445) in 23S rRNA + S-adenosyl-L-homocysteine + H(+). It catalyses the reaction guanosine(2069) in 23S rRNA + S-adenosyl-L-methionine = N(2)-methylguanosine(2069) in 23S rRNA + S-adenosyl-L-homocysteine + H(+). Specifically methylates the guanine in position 2445 (m2G2445) and the guanine in position 2069 (m7G2069) of 23S rRNA. The sequence is that of Ribosomal RNA large subunit methyltransferase K/L from Francisella philomiragia subsp. philomiragia (strain ATCC 25017 / CCUG 19701 / FSC 153 / O#319-036).